Consider the following 113-residue polypeptide: MNTVRVTFLLVFVLAVSLGQADKDENRMEMQEKAEQGKSYLDFAENLLLQKLEELEAKLLEEDSEESRNSRQKRCIGEGVPCDENDPRCCSGLVCLKPTLHGIWYKSYYCYKK.

An N-terminal signal peptide occupies residues 1–21 (MNTVRVTFLLVFVLAVSLGQA). Positions 22 to 74 (DKDENRMEMQEKAEQGKSYLDFAENLLLQKLEELEAKLLEEDSEESRNSRQKR) are excised as a propeptide. Cystine bridges form between Cys-75/Cys-90, Cys-82/Cys-95, and Cys-89/Cys-110.

The protein belongs to the neurotoxin 14 (magi-1) family. 01 (HNTX-16) subfamily. As to expression, expressed by the venom gland.

The protein localises to the secreted. Functionally, probable ion channel inhibitor. The sequence is that of U11-theraphotoxin-Hhn1a from Cyriopagopus hainanus (Chinese bird spider).